The sequence spans 312 residues: uncharacterized protein (312 aa).

Leu112–Val118 is an ATP binding site.

The protein belongs to the MurCDEF family.

This is an uncharacterized protein from Methanothermobacter thermautotrophicus (strain ATCC 29096 / DSM 1053 / JCM 10044 / NBRC 100330 / Delta H) (Methanobacterium thermoautotrophicum).